Consider the following 121-residue polypeptide: Putative iron-sulfur cluster insertion protein ErpA (121 aa).

Positions 49, 113, and 115 each coordinate iron-sulfur cluster.

The protein belongs to the HesB/IscA family. In terms of assembly, homodimer. The cofactor is iron-sulfur cluster.

Required for insertion of 4Fe-4S clusters. This chain is Putative iron-sulfur cluster insertion protein ErpA, found in Paracidovorax citrulli (strain AAC00-1) (Acidovorax citrulli).